A 410-amino-acid polypeptide reads, in one-letter code: uncharacterized protein (410 aa).

11 helical membrane passes run 14–34 (IIIG…FLAI), 48–68 (GLVI…GGYI), 82–102 (IFGW…WVFF), 140–160 (YAAI…FGSS), 164–184 (TPFL…ALQF), 212–232 (YLFT…SQFS), 251–271 (LYGL…FPIV), 279–299 (PLCS…IFTV), 303–323 (VPSI…LFSM), 342–362 (GAIG…GICI), and 371–391 (IYIF…LAFA).

Belongs to the major facilitator superfamily. TCR/Tet family.

The protein resides in the cell membrane. This is an uncharacterized protein from Bacillus subtilis (strain 168).